We begin with the raw amino-acid sequence, 217 residues long: Thymidylate kinase (217 aa).

12–19 (GIDGSGKS) serves as a coordination point for ATP.

It belongs to the thymidylate kinase family.

The catalysed reaction is dTMP + ATP = dTDP + ADP. Functionally, phosphorylation of dTMP to form dTDP in both de novo and salvage pathways of dTTP synthesis. In Cereibacter sphaeroides (strain ATCC 17023 / DSM 158 / JCM 6121 / CCUG 31486 / LMG 2827 / NBRC 12203 / NCIMB 8253 / ATH 2.4.1.) (Rhodobacter sphaeroides), this protein is Thymidylate kinase.